The chain runs to 186 residues: Superoxide dismutase [Cu-Zn] (186 aa).

A signal peptide spans 1-22 (MNMKTLLALAVSAVCSVSVAQA). Cu cation is bound by residues histidine 79, histidine 81, and histidine 104. Cysteine 86 and cysteine 182 form a disulfide bridge. Zn(2+) contacts are provided by histidine 104, histidine 113, histidine 122, and aspartate 125. Histidine 160 provides a ligand contact to Cu cation.

This sequence belongs to the Cu-Zn superoxide dismutase family. Homodimer. Requires Cu cation as cofactor. The cofactor is Zn(2+).

The protein localises to the periplasm. The catalysed reaction is 2 superoxide + 2 H(+) = H2O2 + O2. Functionally, destroys radicals which are normally produced within the cells and which are toxic to biological systems. The chain is Superoxide dismutase [Cu-Zn] (sodC) from Neisseria meningitidis serogroup A / serotype 4A (strain DSM 15465 / Z2491).